We begin with the raw amino-acid sequence, 456 residues long: Methylenetetrahydrofolate--tRNA-(uracil-5-)-methyltransferase TrmFO (456 aa).

Position 12-17 (12-17 (GGGLAG)) interacts with FAD.

The protein belongs to the MnmG family. TrmFO subfamily. FAD serves as cofactor.

The protein localises to the cytoplasm. The catalysed reaction is uridine(54) in tRNA + (6R)-5,10-methylene-5,6,7,8-tetrahydrofolate + NADH + H(+) = 5-methyluridine(54) in tRNA + (6S)-5,6,7,8-tetrahydrofolate + NAD(+). The enzyme catalyses uridine(54) in tRNA + (6R)-5,10-methylene-5,6,7,8-tetrahydrofolate + NADPH + H(+) = 5-methyluridine(54) in tRNA + (6S)-5,6,7,8-tetrahydrofolate + NADP(+). Its function is as follows. Catalyzes the folate-dependent formation of 5-methyl-uridine at position 54 (M-5-U54) in all tRNAs. This chain is Methylenetetrahydrofolate--tRNA-(uracil-5-)-methyltransferase TrmFO, found in Picosynechococcus sp. (strain ATCC 27264 / PCC 7002 / PR-6) (Agmenellum quadruplicatum).